Here is a 468-residue protein sequence, read N- to C-terminus: Ribulose bisphosphate carboxylase large chain (468 aa).

An N6,N6,N6-trimethyllysine modification is found at Lys-7. Substrate is bound by residues Asn-116 and Thr-166. The active-site Proton acceptor is the Lys-168. Lys-170 serves as a coordination point for substrate. Lys-194, Asp-196, and Glu-197 together coordinate Mg(2+). At Lys-194 the chain carries N6-carboxylysine. The active-site Proton acceptor is the His-287. Positions 288, 320, and 372 each coordinate substrate.

It belongs to the RuBisCO large chain family. Type I subfamily. In terms of assembly, heterohexadecamer of 8 large chains and 8 small chains; disulfide-linked. The disulfide link is formed within the large subunit homodimers. The cofactor is Mg(2+). In terms of processing, the disulfide bond which can form in the large chain dimeric partners within the hexadecamer appears to be associated with oxidative stress and protein turnover.

Its subcellular location is the plastid. It localises to the chloroplast. The catalysed reaction is 2 (2R)-3-phosphoglycerate + 2 H(+) = D-ribulose 1,5-bisphosphate + CO2 + H2O. It catalyses the reaction D-ribulose 1,5-bisphosphate + O2 = 2-phosphoglycolate + (2R)-3-phosphoglycerate + 2 H(+). Functionally, ruBisCO catalyzes two reactions: the carboxylation of D-ribulose 1,5-bisphosphate, the primary event in carbon dioxide fixation, as well as the oxidative fragmentation of the pentose substrate in the photorespiration process. Both reactions occur simultaneously and in competition at the same active site. This is Ribulose bisphosphate carboxylase large chain from Cornus alternifolia (Pagoda dogwood).